We begin with the raw amino-acid sequence, 807 residues long: Tyrosine-protein phosphatase non-receptor type 22 (807 aa).

Residues 24 to 289 (FANEFLKLKR…ELVYNAVLEL (266 aa)) form the Tyrosine-protein phosphatase domain. Residue serine 35 is modified to Phosphoserine; by PKC/PRKCD. A disulfide bridge connects residues cysteine 129 and cysteine 227. Cysteine 227 functions as the Phosphocysteine intermediate in the catalytic mechanism. Substrate is bound by residues 227 to 233 (CSAGCGR) and glutamine 274. A phosphoserine mark is found at serine 449, serine 635, serine 684, and serine 692. Disordered stretches follow at residues 676–700 (SVKLRSPKSELHQDRSSPPPPLPER) and 724–746 (SYPDTMENSTSSKQTLKTPGKSF).

The protein belongs to the protein-tyrosine phosphatase family. Non-receptor class 4 subfamily. Interacts with CSK. Interacts with LPXN. Interacts with CBL. Interacts with TRAF3 (via MATH domain); the interaction promotes TRAF3 polyubiquitination. In terms of processing, phosphorylation on Ser-35 by PKC/PRKCD abrogates its ability to dephosphorylate and inactivate the SRC family kinases. As to expression, expressed in bone marrow, B and T-cells, PBMCs, natural killer cells, monocytes, dendritic cells and neutrophils. Both isoform 1 and 4 are predominantly expressed in lymphoid tissues and cells. Isoform 1 is expressed in thymocytes and both mature B and T-cells.

The protein resides in the cytoplasm. It catalyses the reaction O-phospho-L-tyrosyl-[protein] + H2O = L-tyrosyl-[protein] + phosphate. The catalysed reaction is N-(5Z,8Z,11Z,14Z-eicosatetraenoyl)-ethanolamine phosphate + H2O = N-(5Z,8Z,11Z,14Z-eicosatetraenoyl)-ethanolamine + phosphate. Its activity is regulated as follows. Down-regulated by phosphorylation. Acts as a negative regulator of T-cell receptor (TCR) signaling by direct dephosphorylation of the Src family kinases LCK and FYN, ITAMs of the TCRz/CD3 complex, as well as ZAP70, VAV, VCP and other key signaling molecules. Associates with and probably dephosphorylates CBL. Dephosphorylates LCK at its activating 'Tyr-394' residue. Dephosphorylates ZAP70 at its activating 'Tyr-493' residue. Dephosphorylates the immune system activator SKAP2. Positively regulates toll-like receptor (TLR)-induced type 1 interferon production. Promotes host antiviral responses mediated by type 1 interferon. Regulates NOD2-induced pro-inflammatory cytokine secretion and autophagy. Acts as an activator of NLRP3 inflammasome assembly by mediating dephosphorylation of 'Tyr-861' of NLRP3. Dephosphorylates phospho-anandamide (p-AEA), an endocannabinoid to anandamide (also called N-arachidonoylethanolamide). In Homo sapiens (Human), this protein is Tyrosine-protein phosphatase non-receptor type 22 (PTPN22).